The following is a 118-amino-acid chain: Small ribosomal subunit protein uS13 (118 aa).

A disordered region spans residues 94–118 (SLPLRGQRTKTNARTRKGPRKPIRK).

This sequence belongs to the universal ribosomal protein uS13 family. In terms of assembly, part of the 30S ribosomal subunit. Forms a loose heterodimer with protein S19. Forms two bridges to the 50S subunit in the 70S ribosome.

Its function is as follows. Located at the top of the head of the 30S subunit, it contacts several helices of the 16S rRNA. In the 70S ribosome it contacts the 23S rRNA (bridge B1a) and protein L5 of the 50S subunit (bridge B1b), connecting the 2 subunits; these bridges are implicated in subunit movement. Contacts the tRNAs in the A and P-sites. In Shewanella woodyi (strain ATCC 51908 / MS32), this protein is Small ribosomal subunit protein uS13.